The sequence spans 279 residues: Virginiamycin B lyase (279 aa).

Substrate is bound at residue histidine 215. Residue glutamate 253 participates in Mg(2+) binding. The active-site Proton acceptor is the histidine 255. Mg(2+) is bound at residue glutamate 270.

It belongs to the Vgb family. Monomer. Mg(2+) serves as cofactor.

Inactivates the type B streptogramin antibiotics by linearizing the lactone ring at the ester linkage, generating a free phenylglycine carboxylate and converting the threonyl moiety into 2-amino-butenoic acid. This chain is Virginiamycin B lyase, found in Nocardia farcinica (strain IFM 10152).